We begin with the raw amino-acid sequence, 484 residues long: GRIP domain-containing protein RUD3 (484 aa).

Positions 1–15 (MGKNKKKTGKKAKSH) are enriched in basic residues. The interval 1–75 (MGKNKKKTGK…GVDKQKVNDG (75 aa)) is disordered. Residues 16-30 (PHVEDVDETVNKPEE) show a composition bias toward basic and acidic residues. Residues serine 55 and serine 64 each carry the phosphoserine modification. A compositionally biased stretch (basic and acidic residues) spans 61–72 (KDLSEGVDKQKV). The stretch at 84-383 (LEDKKAGDEM…LQIGKLRHEA (300 aa)) forms a coiled coil. Residues 401–452 (SDSESVDKELISNLLISFVSIPRADPRKFEVLELLSNFLNWDEDKKQQAGLI) enclose the GRIP domain. A Phosphoserine modification is found at serine 468.

It localises to the golgi apparatus lumen. In terms of biological role, involved in the structural organization of the cis-Golgi and in vesicle targeting/fusion stages of ER to Golgi transport. This chain is GRIP domain-containing protein RUD3 (RUD3), found in Saccharomyces cerevisiae (strain ATCC 204508 / S288c) (Baker's yeast).